A 206-amino-acid polypeptide reads, in one-letter code: MVSGSGICAKRVVVDGRHHMLGRLASNTAKELLNGQEVVVVRCEEICLSGGLVRQKMKYMRFLRKRMNTKPSHGPIHFRAPSKIFWRTVRGMIPHKTKRGAAALARLKVFEGIPPPYDKIKRMVIPDALKVLRLQSGHKYCLLGRLSSEVGWNHYDTIKELETKRKERSQVMYERKKQLNKLRTKAEKVAEERLGSQLDVLAPVKY.

It belongs to the universal ribosomal protein uL13 family.

The polypeptide is Large ribosomal subunit protein uL13x (RPL13AC) (Arabidopsis thaliana (Mouse-ear cress)).